The following is a 2358-amino-acid chain: Cell wall alpha-1,3-glucan synthase mok13 (2358 aa).

The span at 1645–1659 shows a compositional bias: basic and acidic residues; sequence EGLENEENELKDKAP. The interval 1645–1669 is disordered; it reads EGLENEENELKDKAPPNEPNVGSLF.

Belongs to the glycosyltransferase group 1 family.

The catalysed reaction is [(1-&gt;3)-alpha-D-glucosyl](n) + UDP-alpha-D-glucose = [(1-&gt;3)-alpha-D-glucosyl](n+1) + UDP + H(+). The chain is Cell wall alpha-1,3-glucan synthase mok13 (mok13) from Schizosaccharomyces pombe (strain 972 / ATCC 24843) (Fission yeast).